The sequence spans 888 residues: Alanine--tRNA ligase (888 aa).

Residues histidine 564, histidine 568, cysteine 676, and histidine 680 each contribute to the Zn(2+) site.

This sequence belongs to the class-II aminoacyl-tRNA synthetase family. It depends on Zn(2+) as a cofactor.

The protein resides in the cytoplasm. It catalyses the reaction tRNA(Ala) + L-alanine + ATP = L-alanyl-tRNA(Ala) + AMP + diphosphate. Functionally, catalyzes the attachment of alanine to tRNA(Ala) in a two-step reaction: alanine is first activated by ATP to form Ala-AMP and then transferred to the acceptor end of tRNA(Ala). Also edits incorrectly charged Ser-tRNA(Ala) and Gly-tRNA(Ala) via its editing domain. The sequence is that of Alanine--tRNA ligase from Bartonella quintana (strain Toulouse) (Rochalimaea quintana).